A 167-amino-acid chain; its full sequence is NADH-quinone oxidoreductase subunit I 1 (167 aa).

4Fe-4S ferredoxin-type domains lie at 58 to 88 (LRRY…IDAE) and 98 to 127 (TRYD…EGPN). [4Fe-4S] cluster-binding residues include Cys-68, Cys-71, Cys-74, Cys-78, Cys-107, Cys-110, Cys-113, and Cys-117.

It belongs to the complex I 23 kDa subunit family. NDH-1 is composed of 14 different subunits. Subunits NuoA, H, J, K, L, M, N constitute the membrane sector of the complex. Requires [4Fe-4S] cluster as cofactor.

It is found in the cell inner membrane. It carries out the reaction a quinone + NADH + 5 H(+)(in) = a quinol + NAD(+) + 4 H(+)(out). Functionally, NDH-1 shuttles electrons from NADH, via FMN and iron-sulfur (Fe-S) centers, to quinones in the respiratory chain. The immediate electron acceptor for the enzyme in this species is believed to be ubiquinone. Couples the redox reaction to proton translocation (for every two electrons transferred, four hydrogen ions are translocated across the cytoplasmic membrane), and thus conserves the redox energy in a proton gradient. The sequence is that of NADH-quinone oxidoreductase subunit I 1 from Cereibacter sphaeroides (strain ATCC 17029 / ATH 2.4.9) (Rhodobacter sphaeroides).